Consider the following 396-residue polypeptide: L-tyrosine/L-aspartate decarboxylase (396 aa).

K245 is modified (N6-(pyridoxal phosphate)lysine).

It belongs to the group II decarboxylase family. MfnA subfamily. As to quaternary structure, homodimer. Pyridoxal 5'-phosphate serves as cofactor.

The catalysed reaction is L-tyrosine + H(+) = tyramine + CO2. It carries out the reaction L-aspartate + H(+) = beta-alanine + CO2. The protein operates within cofactor biosynthesis; methanofuran biosynthesis. It participates in cofactor biosynthesis; coenzyme A biosynthesis. Its activity is regulated as follows. Inhibited by hydroxylamine and O-methylhydroxylamine. Functionally, catalyzes the decarboxylation of L-tyrosine to produce tyramine for methanofuran biosynthesis. Can also catalyze the decarboxylation of L-aspartate to produce beta-alanine for coenzyme A (CoA) biosynthesis. In Methanocaldococcus jannaschii (strain ATCC 43067 / DSM 2661 / JAL-1 / JCM 10045 / NBRC 100440) (Methanococcus jannaschii), this protein is L-tyrosine/L-aspartate decarboxylase.